The following is a 308-amino-acid chain: Olfactory receptor 4N5 (308 aa).

At 1–25 (METQNLTVVTEFILLGLTQSQDAQL) the chain is on the extracellular side. N-linked (GlcNAc...) asparagine glycosylation is present at Asn-5. The helical transmembrane segment at 26 to 49 (LVFVLVLIFYLIILPGNFLIIFTI) threads the bilayer. Over 50–57 (KSDPGLTA) the chain is Cytoplasmic. A helical membrane pass occupies residues 58–79 (PLYFFLGNLALLDASYSFIVVP). The Extracellular portion of the chain corresponds to 80-100 (RMLVDFLSEKKVISYRSCITQ). A disulfide bridge links Cys-97 with Cys-189. The chain crosses the membrane as a helical span at residues 101–120 (LFFLHFLGAGEMFLLVVMAF). The Cytoplasmic segment spans residues 121-139 (DRYIAICRPLHYSTIMNPR). The helical transmembrane segment at 140-158 (ACYALSLVLWLGGFIHSIV) threads the bilayer. Over 159–195 (QVALILHLPFCGPNQLDNFFCDVPQVIKLACTNTFVV) the chain is Extracellular. A helical membrane pass occupies residues 196-219 (ELLMVSNSGLLSLLCFLGLLASYA). At 220 to 235 (VILCRIREHSSEGKSK) the chain is on the cytoplasmic side. A helical membrane pass occupies residues 236-258 (AISTCTTHIIIIFLMFGPAIFIY). Residues 259–269 (TCPFQAFPADK) are Extracellular-facing. Residues 270–289 (VVSLFHTVIFPLMNPVIYTL) traverse the membrane as a helical segment. The Cytoplasmic segment spans residues 290-308 (RNQEVKASMRKLLSQHMFC).

Belongs to the G-protein coupled receptor 1 family.

The protein localises to the cell membrane. Functionally, odorant receptor. The sequence is that of Olfactory receptor 4N5 (OR4N5) from Homo sapiens (Human).